The following is a 320-amino-acid chain: FHA domain-containing protein FHA2 (320 aa).

Ala-2 carries the post-translational modification N-acetylalanine. The FHA domain maps to Ile-32 to His-89. The interval Val-138–Glu-211 is disordered. The span at Glu-163–Asp-178 shows a compositional bias: acidic residues. The segment covering Gly-198–Arg-210 has biased composition (basic and acidic residues).

Widely expressed.

The protein localises to the nucleus. May play a role in the control of plant organ development and specifically in the regulation of stamen development. Does not show transactivation activity in yeast. This chain is FHA domain-containing protein FHA2, found in Arabidopsis thaliana (Mouse-ear cress).